The sequence spans 315 residues: BTB/POZ domain-containing adapter for CUL3-mediated RhoA degradation protein 3 (315 aa).

N-acetylmethionine is present on methionine 1. At serine 23 the chain carries Phosphoserine. In terms of domain architecture, BTB spans 32–100 (KYVKLNVGGA…LRDGAVPLPE (69 aa)). An Interaction with PCNA motif is present at residues 239–245 (QTKVEFP). Positions 269 to 294 (NALLEATGGAAGRSHHLDEDEERERE) are disordered.

This sequence belongs to the BACURD family. In terms of assembly, homotetramer; forms a two-fold symmetric tetramer in solution. Interacts with CUL3; interaction is direct and forms a 5:5 heterodecamer. Component of the BCR(BACURD3) E3 ubiquitin ligase complex, at least composed of CUL3, KCTD10/BACURD3 and RBX1. Interacts with DNA polymerase delta subunit 2/POLD2. Interacts with PCNA. In terms of tissue distribution, expressed at highest levels in lung. Also detected in testis and heart. Very low expression, if any, in brain, liver, spleen, kidney and skeletal muscle.

It is found in the nucleus. It functions in the pathway protein modification; protein ubiquitination. Substrate-specific adapter of a BCR (BTB-CUL3-RBX1) E3 ubiquitin-protein ligase complex. The BCR(BACURD3) E3 ubiquitin ligase complex mediates the ubiquitination of target proteins, leading to their degradation by the proteasome. The protein is BTB/POZ domain-containing adapter for CUL3-mediated RhoA degradation protein 3 (Kctd10) of Rattus norvegicus (Rat).